A 663-amino-acid polypeptide reads, in one-letter code: Cytoplasmic dynein 1 intermediate chain (663 aa).

Over residues 17–37 the composition is skewed to basic and acidic residues; sequence LREEKDRRRREKEIKDMEEAA. Disordered stretches follow at residues 17-52 and 75-107; these read LREE…DQRK and SVNS…KKQP. Low complexity predominate over residues 75-85; that stretch reads SVNSMTSDNSN. Over residues 86–99 the composition is skewed to polar residues; the sequence is TQTPDASLQATVNG. WD repeat units follow at residues 311-360, 364-404, 413-454, 463-503, 508-553, 556-596, and 602-641; these read SKNR…STPE, HCQS…RTPI, AHTH…QPQD, SKAI…SGVN, RHLG…PLYS, DNSD…EVPT, and AGAP…AQPS.

It belongs to the dynein intermediate chain family. Homodimer. The cytoplasmic dynein 1 complex consists of two catalytic heavy chains (HCs) and a number of non-catalytic subunits presented by intermediate chains (ICs), light intermediate chains (LICs) and light chains (LCs). As to expression, high levels of isoform 1b, isoform 1c, isoform 3a and isoform 4 accumulate in early egg chambers and at stage 9 become concentrated at the posterior of the oocyte. Isoform 5a and isoform 5b are highly expressed in adult head and to a lesser extent in adult torso. Isoform 1a, isoform 2a and isoform 2b are found in all tissues examined, including ovaries, midgut, torso and head.

Its subcellular location is the cytoplasm. It localises to the cytoskeleton. The protein localises to the lysosome membrane. It is found in the nucleus membrane. Functionally, acts as one of several non-catalytic accessory components of the cytoplasmic dynein 1 complex that are thought to be involved in linking dynein to cargos and to adapter proteins that regulate dynein function. Cytoplasmic dynein 1 acts as a motor for the intracellular retrograde motility of vesicles and organelles along microtubules. The intermediate chains mediate the help dynein bind to dynactin 150 kDa component. This is Cytoplasmic dynein 1 intermediate chain (sw) from Drosophila melanogaster (Fruit fly).